A 381-amino-acid polypeptide reads, in one-letter code: Homoserine O-succinyltransferase (381 aa).

The 316-residue stretch at 45-360 folds into the AB hydrolase-1 domain; sequence NAVLVCHALN…PHGHDAFLLD (316 aa). Serine 151 (nucleophile) is an active-site residue. Arginine 221 contacts substrate. Catalysis depends on residues aspartate 321 and histidine 354. Aspartate 355 contacts substrate.

This sequence belongs to the AB hydrolase superfamily. MetX family. Homodimer.

It is found in the cytoplasm. It carries out the reaction L-homoserine + succinyl-CoA = O-succinyl-L-homoserine + CoA. It functions in the pathway amino-acid biosynthesis; L-methionine biosynthesis via de novo pathway; O-succinyl-L-homoserine from L-homoserine: step 1/1. Transfers a succinyl group from succinyl-CoA to L-homoserine, forming succinyl-L-homoserine. In Burkholderia vietnamiensis (strain G4 / LMG 22486) (Burkholderia cepacia (strain R1808)), this protein is Homoserine O-succinyltransferase.